The following is a 396-amino-acid chain: Acetate kinase (396 aa).

Position 8 (Asn-8) interacts with Mg(2+). Lys-15 serves as a coordination point for ATP. Arg-89 contributes to the substrate binding site. Asp-146 (proton donor/acceptor) is an active-site residue. ATP is bound by residues 206–210 (HIGNG), 283–285 (DMR), and 331–335 (GVGEN). Glu-383 contributes to the Mg(2+) binding site.

This sequence belongs to the acetokinase family. As to quaternary structure, homodimer. It depends on Mg(2+) as a cofactor. The cofactor is Mn(2+).

It localises to the cytoplasm. The catalysed reaction is acetate + ATP = acetyl phosphate + ADP. The protein operates within metabolic intermediate biosynthesis; acetyl-CoA biosynthesis; acetyl-CoA from acetate: step 1/2. Catalyzes the formation of acetyl phosphate from acetate and ATP. Can also catalyze the reverse reaction. This Streptococcus pneumoniae (strain JJA) protein is Acetate kinase.